The chain runs to 558 residues: T-complex protein 1 subunit eta (558 aa).

The disordered stretch occupies residues 524 to 558 (VRNPKSEQPKAPPGGLRRGGPQGMAGLAKNARLGK).

The protein belongs to the TCP-1 chaperonin family. In terms of assembly, heterooligomeric complex of about 850 to 900 kDa that forms two stacked rings, 12 to 16 nm in diameter.

Its subcellular location is the cytoplasm. Functionally, molecular chaperone; assists the folding of proteins upon ATP hydrolysis. Known to play a role, in vitro, in the folding of actin and tubulin. This Tetrahymena pyriformis protein is T-complex protein 1 subunit eta.